Here is a 454-residue protein sequence, read N- to C-terminus: Cysteine--tRNA ligase (454 aa).

Zn(2+) is bound at residue Cys-27. The 'HIGH' region signature appears at 29–39 (PTVQDHFHIGH). Zn(2+) is bound by residues Asp-207, His-232, and Glu-236. A 'KMSKS' region motif is present at residues 265–269 (KMSKS). Lys-268 provides a ligand contact to ATP.

Belongs to the class-I aminoacyl-tRNA synthetase family. Requires Zn(2+) as cofactor.

The protein resides in the cytoplasm. It catalyses the reaction tRNA(Cys) + L-cysteine + ATP = L-cysteinyl-tRNA(Cys) + AMP + diphosphate. This is Cysteine--tRNA ligase from Thermoplasma volcanium (strain ATCC 51530 / DSM 4299 / JCM 9571 / NBRC 15438 / GSS1).